The primary structure comprises 460 residues: UDP-N-acetylmuramoylalanine--D-glutamate ligase (460 aa).

117–123 (GTNGKTT) lines the ATP pocket.

The protein belongs to the MurCDEF family.

The protein localises to the cytoplasm. It carries out the reaction UDP-N-acetyl-alpha-D-muramoyl-L-alanine + D-glutamate + ATP = UDP-N-acetyl-alpha-D-muramoyl-L-alanyl-D-glutamate + ADP + phosphate + H(+). The protein operates within cell wall biogenesis; peptidoglycan biosynthesis. Cell wall formation. Catalyzes the addition of glutamate to the nucleotide precursor UDP-N-acetylmuramoyl-L-alanine (UMA). This is UDP-N-acetylmuramoylalanine--D-glutamate ligase from Prochlorococcus marinus (strain MIT 9313).